A 163-amino-acid chain; its full sequence is Bursicon (163 aa).

Positions 1–23 (MKSSVCVLLKVLACILLPGGLNA) are cleaved as a signal peptide. Cystine bridges form between Cys39–Cys88, Cys53–Cys102, Cys63–Cys123, Cys67–Cys125, and Cys85–Cys128. The region spanning 39–129 (CQVTPVIHVL…PLECMCRPCT (91 aa)) is the CTCK domain.

In terms of assembly, heterodimer of burs and pburs.

The protein localises to the secreted. Functionally, final heterodimeric neurohormone released at the end of the molting cycle, involved in the sclerotization (tanning) of the insect cuticle, melanization and wing spreading. The protein is Bursicon of Aedes aegypti (Yellowfever mosquito).